The chain runs to 360 residues: Peptide chain release factor 1 (360 aa).

Gln234 bears the N5-methylglutamine mark. Positions 285–305 (RAQGIAEDRKSQVGTGDRSER) are disordered.

This sequence belongs to the prokaryotic/mitochondrial release factor family. Methylated by PrmC. Methylation increases the termination efficiency of RF1.

The protein resides in the cytoplasm. Its function is as follows. Peptide chain release factor 1 directs the termination of translation in response to the peptide chain termination codons UAG and UAA. This Clostridium beijerinckii (strain ATCC 51743 / NCIMB 8052) (Clostridium acetobutylicum) protein is Peptide chain release factor 1.